The primary structure comprises 227 residues: Ribosomal RNA large subunit methyltransferase E (227 aa).

Glycine 78, tryptophan 80, aspartate 103, aspartate 119, and aspartate 143 together coordinate S-adenosyl-L-methionine. Lysine 183 acts as the Proton acceptor in catalysis.

Belongs to the class I-like SAM-binding methyltransferase superfamily. RNA methyltransferase RlmE family.

It localises to the cytoplasm. The catalysed reaction is uridine(2552) in 23S rRNA + S-adenosyl-L-methionine = 2'-O-methyluridine(2552) in 23S rRNA + S-adenosyl-L-homocysteine + H(+). Its function is as follows. Specifically methylates the uridine in position 2552 of 23S rRNA at the 2'-O position of the ribose in the fully assembled 50S ribosomal subunit. This Rickettsia typhi (strain ATCC VR-144 / Wilmington) protein is Ribosomal RNA large subunit methyltransferase E.